A 283-amino-acid polypeptide reads, in one-letter code: Beta-glucoside operon antiterminator (283 aa).

PRD domains follow at residues 65–170 (RIPL…SHMP) and 171–280 (EVMR…LQEQ).

It belongs to the transcriptional antiterminator BglG family. In terms of processing, phosphorylated and inactivated by ArbF (EII-Bgl). The degree of phosphorylation is dependent on the presence or absence of beta-glucosides which act as inducers of the operon expression. Addition of inducer result in the rapid dephosphorylation of ArbG.

Functionally, mediates the positive regulation of the beta-glucoside (arb) operon by functioning as a transcriptional antiterminator. This is an RNA-binding protein that recognizes a specific sequence located just upstream of two termination sites within the operon. The sequence is that of Beta-glucoside operon antiterminator (arbG) from Dickeya chrysanthemi (Pectobacterium chrysanthemi).